The chain runs to 225 residues: NAD(P)H-quinone oxidoreductase subunit K, chloroplastic (225 aa).

Residues Cys-43, Cys-44, Cys-108, and Cys-139 each coordinate [4Fe-4S] cluster.

This sequence belongs to the complex I 20 kDa subunit family. NDH is composed of at least 16 different subunits, 5 of which are encoded in the nucleus. [4Fe-4S] cluster is required as a cofactor.

It is found in the plastid. The protein resides in the chloroplast thylakoid membrane. It catalyses the reaction a plastoquinone + NADH + (n+1) H(+)(in) = a plastoquinol + NAD(+) + n H(+)(out). It carries out the reaction a plastoquinone + NADPH + (n+1) H(+)(in) = a plastoquinol + NADP(+) + n H(+)(out). Functionally, NDH shuttles electrons from NAD(P)H:plastoquinone, via FMN and iron-sulfur (Fe-S) centers, to quinones in the photosynthetic chain and possibly in a chloroplast respiratory chain. The immediate electron acceptor for the enzyme in this species is believed to be plastoquinone. Couples the redox reaction to proton translocation, and thus conserves the redox energy in a proton gradient. The polypeptide is NAD(P)H-quinone oxidoreductase subunit K, chloroplastic (Populus trichocarpa (Western balsam poplar)).